A 594-amino-acid polypeptide reads, in one-letter code: A-type ATP synthase subunit A (594 aa).

236–243 provides a ligand contact to ATP; the sequence is GPFGSGKT.

This sequence belongs to the ATPase alpha/beta chains family. As to quaternary structure, has multiple subunits with at least A(3), B(3), C, D, E, F, H, I and proteolipid K(x).

Its subcellular location is the cell membrane. The catalysed reaction is ATP + H2O + 4 H(+)(in) = ADP + phosphate + 5 H(+)(out). Its function is as follows. Component of the A-type ATP synthase that produces ATP from ADP in the presence of a proton gradient across the membrane. The A chain is the catalytic subunit. This Pyrobaculum calidifontis (strain DSM 21063 / JCM 11548 / VA1) protein is A-type ATP synthase subunit A.